The sequence spans 174 residues: Dual-action ribosomal maturation protein DarP (174 aa).

The protein belongs to the DarP family.

Its subcellular location is the cytoplasm. In terms of biological role, member of a network of 50S ribosomal subunit biogenesis factors which assembles along the 30S-50S interface, preventing incorrect 23S rRNA structures from forming. Promotes peptidyl transferase center (PTC) maturation. In Vibrio campbellii (strain ATCC BAA-1116), this protein is Dual-action ribosomal maturation protein DarP.